An 827-amino-acid polypeptide reads, in one-letter code: Valine--tRNA ligase (827 aa).

Residues 41-51 carry the 'HIGH' region motif; that stretch reads PNVTGQLHLGH. The 'KMSKS' region motif lies at 511–515; sequence KMTKS. Lys514 is an ATP binding site. A coiled-coil region spans residues 765–827; it reads ENLSKEKAQK…KELLDEKIIE (63 aa).

It belongs to the class-I aminoacyl-tRNA synthetase family. ValS type 1 subfamily. As to quaternary structure, monomer.

Its subcellular location is the cytoplasm. The enzyme catalyses tRNA(Val) + L-valine + ATP = L-valyl-tRNA(Val) + AMP + diphosphate. Functionally, catalyzes the attachment of valine to tRNA(Val). As ValRS can inadvertently accommodate and process structurally similar amino acids such as threonine, to avoid such errors, it has a 'posttransfer' editing activity that hydrolyzes mischarged Thr-tRNA(Val) in a tRNA-dependent manner. In Mycoplasmopsis pulmonis (strain UAB CTIP) (Mycoplasma pulmonis), this protein is Valine--tRNA ligase.